The following is a 396-amino-acid chain: MKKFFICKSKFFKNPTFSGLLLILFCFLAIFISNTNFWKTYNYIINYPLIKINTHDKNFSLTNIVNDILMTFFFLEIGIEIKHEMLVGSLKNKSRAILPGIAAIGGMIFPALIYNFITKEDSSISSGWAITVATDIAFAVGVLKILGHSIPHSLLIFLLSLAIFDDIGAILIIAFFYSNHIDQYMILLSTLVILTILSINYLRVTCIYIYIIFGILLWESIFLSGIHSTISGVILGILMPHSSYLSSSKYEKSMAFLKKSLSFLNKYFILPIFAFFNSGINFSNFENLSSSLLPFGIFFGLVLGKPIGVFLFSYLSVKFKLSKLPVGISFKEIAGISFLCGIGFTMSIFISNLAFQNINEKIIYIAKFSILISSIVSSVIGFLFLYFLYKKIKLKN.

11 helical membrane passes run 17–37 (FSGL…NTNF), 59–79 (FSLT…EIGI), 97–117 (ILPG…YNFI), 127–147 (GWAI…KILG), 156–176 (IFLL…IAFF), 181–201 (IDQY…SINY), 206–226 (CIYI…LSGI), 260–280 (SLSF…NSGI), 292–312 (LLPF…VFLF), 333–353 (IAGI…ISNL), and 368–388 (FSIL…LYFL).

Belongs to the NhaA Na(+)/H(+) (TC 2.A.33) antiporter family.

It is found in the cell membrane. The enzyme catalyses Na(+)(in) + 2 H(+)(out) = Na(+)(out) + 2 H(+)(in). In terms of biological role, na(+)/H(+) antiporter that extrudes sodium in exchange for external protons. The polypeptide is Na(+)/H(+) antiporter NhaA (Wigglesworthia glossinidia brevipalpis).